The chain runs to 255 residues: Taurine import ATP-binding protein TauB (255 aa).

The ABC transporter domain maps to Leu-2–Ser-229. Gly-34 to Thr-41 is a binding site for ATP.

It belongs to the ABC transporter superfamily. Taurine importer (TC 3.A.1.17.1) family. In terms of assembly, the complex is composed of two ATP-binding proteins (TauB), two transmembrane proteins (TauC) and a solute-binding protein (TauA).

It localises to the cell inner membrane. It catalyses the reaction taurine(out) + ATP + H2O = taurine(in) + ADP + phosphate + H(+). Functionally, part of the ABC transporter complex TauABC involved in taurine import. Responsible for energy coupling to the transport system. This Shigella flexneri protein is Taurine import ATP-binding protein TauB.